The primary structure comprises 352 residues: MAVVMDGVKKNIIDRTIPNLVKKFQNFNNDDIAYFLKLLHETGIDLFEINRDSMDKIKKFPLNLDYIYRIENIEDYNYLNNYNFKYIILNYKTIYRFLLEDEKIQKNLKEHNIILEIDIEDLDELYLSEDNKIFCIFNIVCLRINNLSKLDFIDEDFRIKDLKSKFNVLVDFCASNKYNMATAIIINAFLNGSDIITTEFNSNDYAAMEEVIIALKSIRNIEIRGDLKLISKLTRIYEKITSERVYSMKPILGEDIFKYESGIHADGIAKNPKNYEPFNPELIGTNRKLYIGKHSGKAALVVKFKELNLNCNNIDMNLFLQDIREKSIQEKRNVLDNEIIEMYKEYNKSYQR.

Belongs to the alpha-IPM synthase/homocitrate synthase family. Heterodimer of an alpha and an omega chain.

It carries out the reaction acetyl-CoA + 2-oxoglutarate + H2O = (2R)-homocitrate + CoA + H(+). This protein is a Fe-Mo-cofactor biosynthetic component. This Clostridium pasteurianum protein is Homocitrate synthase, omega subunit (nifV-OMEGA).